A 484-amino-acid polypeptide reads, in one-letter code: Signal transduction histidine-protein kinase/phosphatase MprB (484 aa).

Low complexity predominate over residues 1–10 (MAADNAGRWP). Residues 1–23 (MAADNAGRWPGQPPGPPAPTHPA) are disordered. The Cytoplasmic portion of the chain corresponds to 1-31 (MAADNAGRWPGQPPGPPAPTHPASSVSLRWR). Residues 11–20 (GQPPGPPAPT) are compositionally biased toward pro residues. The helical transmembrane segment at 32 to 52 (VMLLAMSMVVISVVLMAVAVF) threads the bilayer. The Extracellular portion of the chain corresponds to 53 to 172 (AVTSRALYDD…TGKVLKRLGT (120 aa)). Residues 173–193 (VLLIVGGLGVAVAAIAGGMVA) traverse the membrane as a helical segment. One can recognise an HAMP domain in the interval 194 to 246 (SAGLRPVGRLTQAAERVARTDDLRPIPVIGNDELARLTETFNMMLRALAESRE). Residues 194–484 (SAGLRPVGRL…SPAGSDEAER (291 aa)) lie on the Cytoplasmic side of the membrane. The 221-residue stretch at 254 to 474 (DAGHELRTPL…AMHVVLPGRP (221 aa)) folds into the Histidine kinase domain. His-257 is modified (phosphohistidine; by autocatalysis).

Requires Mg(2+) as cofactor. Mn(2+) serves as cofactor. Autophosphorylated.

The protein localises to the cell membrane. The catalysed reaction is ATP + protein L-histidine = ADP + protein N-phospho-L-histidine.. Functionally, member of the two-component regulatory system MprB/MprA which contributes to maintaining a balance among several systems involved in stress resistance and is required for establishment and maintenance of persistent infection in the host. In response to environmental signals MprB acts both as a membrane-associated protein kinase that undergoes autophosphorylation and subsequently transfers the phosphate to MprA, and a protein phosphatase that dephosphorylates phospho-MprA. The sequence is that of Signal transduction histidine-protein kinase/phosphatase MprB (mprB) from Mycolicibacterium vanbaalenii (strain DSM 7251 / JCM 13017 / BCRC 16820 / KCTC 9966 / NRRL B-24157 / PYR-1) (Mycobacterium vanbaalenii).